Here is a 148-residue protein sequence, read N- to C-terminus: Thiol-disulfide oxidoreductase YkuV (148 aa).

Positions 2–145 constitute a Thioredoxin domain; it reads KLRQPMPELT…LEKRVNRVLA (144 aa). A disulfide bridge connects residues Cys-41 and Cys-44.

In terms of assembly, monomer.

It localises to the cytoplasm. Its function is as follows. Participates in various redox reactions through the reversible oxidation of its active center dithiol to a disulfide and catalyzes dithiol-disulfide exchange reactions. This Bacillus subtilis (strain 168) protein is Thiol-disulfide oxidoreductase YkuV (ykuV).